We begin with the raw amino-acid sequence, 439 residues long: UDP-N-acetylmuramate--L-alanine ligase (439 aa).

An ATP-binding site is contributed by 113–119 (GSHGKTS).

Belongs to the MurCDEF family.

It localises to the cytoplasm. It carries out the reaction UDP-N-acetyl-alpha-D-muramate + L-alanine + ATP = UDP-N-acetyl-alpha-D-muramoyl-L-alanine + ADP + phosphate + H(+). The protein operates within cell wall biogenesis; peptidoglycan biosynthesis. Functionally, cell wall formation. The sequence is that of UDP-N-acetylmuramate--L-alanine ligase from Lactobacillus delbrueckii subsp. bulgaricus (strain ATCC 11842 / DSM 20081 / BCRC 10696 / JCM 1002 / NBRC 13953 / NCIMB 11778 / NCTC 12712 / WDCM 00102 / Lb 14).